The chain runs to 656 residues: UvrABC system protein C (656 aa).

The GIY-YIG domain occupies 41–120 (KSSGCYLFKD…IKTNKPYFNI (80 aa)). One can recognise a UVR domain in the interval 230–265 (DDLEVFLERKMNQYSNDLEFENAAKIRDQISGLKLL).

This sequence belongs to the UvrC family. In terms of assembly, interacts with UvrB in an incision complex.

It is found in the cytoplasm. Its function is as follows. The UvrABC repair system catalyzes the recognition and processing of DNA lesions. UvrC both incises the 5' and 3' sides of the lesion. The N-terminal half is responsible for the 3' incision and the C-terminal half is responsible for the 5' incision. In Prochlorococcus marinus subsp. pastoris (strain CCMP1986 / NIES-2087 / MED4), this protein is UvrABC system protein C.